The following is a 404-amino-acid chain: CD209 antigen (404 aa).

Over 1 to 37 (MSDSKEPRLQQLGLLEEEQLRGLGFRQTRGYKSLAGC) the chain is Cytoplasmic. 3 consecutive short sequence motifs (endocytosis signal) follow at residues 14–15 (LL), 16–18 (EEE), and 31–34 (YKSL). Residues 38–58 (LGHGPLVLQLLSFTLLAGLLV) form a helical; Signal-anchor for type II membrane protein membrane-spanning segment. Residues 59 to 404 (QVSKVPSSIS…APATPNPPPA (346 aa)) lie on the Extracellular side of the membrane. N80 carries an N-linked (GlcNAc...) asparagine glycan. 7 tandem repeats follow at residues 96 to 118 (KLQEIYQELTQLKAAVGELPEKS), 119 to 141 (KLQEIYQELTRLKAAVGELPEKS), 142 to 164 (KLQEIYQELTWLKAAVGELPEKS), 165 to 187 (KMQEIYQELTRLKAAVGELPEKS), 188 to 210 (KQQEIYQELTRLKAAVGELPEKS), 211 to 233 (KQQEIYQELTRLKAAVGELPEKS), and 234 to 257 (KQQEIYQELTQLKAAVERLCHPCP). The interval 96 to 257 (KLQEIYQELT…AVERLCHPCP (162 aa)) is 7 X approximate tandem repeats. 3 disulfide bridges follow: C256–C267, C284–C377, and C356–C369. Residues 263-378 (FQGNCYFMSN…CNLAKFWICK (116 aa)) enclose the C-type lectin domain. Residues E347, N349, V351, E354, N365, and D366 each contribute to the Ca(2+) site.

As to quaternary structure, homotetramer. Interacts with C1QBP; the interaction is indicative for a C1q:C1QBP:CD209 signaling complex. Interacts with ICAM2 and ICAM3 by binding to mannose-like carbohydrates. Interacts (via C-type lectin domain) with CEACAM1 (via Lewis X moieties); this interaction is regulated by the glycosylation pattern of CEACAM1 on cell types and regulates contact between dendritic cells and neutrophils. In terms of assembly, (Microbial infection) Interacts with HIV-1 and HIV-2 gp120. (Microbial infection) Interacts with ebolavirus envelope glycoproteins. As to quaternary structure, (Microbial infection) Interacts with cytomegalovirus gB protein. In terms of assembly, (Microbial infection) Interacts with HCV E2 protein. (Microbial infection) Interacts with dengue virus major envelope protein E. As to quaternary structure, (Microbial infection) Interacts with measles hemagglutinin. In terms of assembly, (Microbial infection) Interacts with herpes simplex virus 1 surface proteins. (Microbial infection) Interacts with Influenzavirus A hemagglutinin. As to quaternary structure, (Microbial infection) Interacts with SARS-CoV spike glycoprotein. In terms of assembly, (Microbial infection) Interacts with Japanese encephalitis virus E protein. (Microbial infection) Interacts with Lassa virus Glycoprotein. As to quaternary structure, (Microbial infection) Interacts with marburg virus glycoprotein. In terms of assembly, (Microbial infection) Interacts with Respiratory syncytial virus glycoprotein G. (Microbial infection) Interacts with Rift valley fever virus and uukuniemi virus envelope glycoprotein. As to quaternary structure, (Microbial infection) Interacts with west-nile virus envelope glycoprotein. In terms of assembly, (Microbial infection) Interacts with whole M.bovis cells in a Ca(2+)-dependent and independent manner; in vitro experiments suggest it interacts with CH60.1 (groL1), DnaK, GADPH (gap) and LrpG. Predominantly expressed in dendritic cells and in DC-residing tissues. Also found in placental macrophages, endothelial cells of placental vascular channels, peripheral blood mononuclear cells, and THP-1 monocytes.

The protein resides in the cell membrane. It localises to the secreted. Functionally, pathogen-recognition receptor expressed on the surface of immature dendritic cells (DCs) and involved in initiation of primary immune response. Thought to mediate the endocytosis of pathogens which are subsequently degraded in lysosomal compartments. The receptor returns to the cell membrane surface and the pathogen-derived antigens are presented to resting T-cells via MHC class II proteins to initiate the adaptive immune response. In terms of biological role, on DCs it is a high affinity receptor for ICAM2 and ICAM3 by binding to mannose-like carbohydrates. May act as a DC rolling receptor that mediates transendothelial migration of DC presursors from blood to tissues by binding endothelial ICAM2. Seems to regulate DC-induced T-cell proliferation by binding to ICAM3 on T-cells in the immunological synapse formed between DC and T-cells. Its function is as follows. (Microbial infection) Acts as an attachment receptor for HIV-1 and HIV-2. (Microbial infection) Acts as an attachment receptor for Ebolavirus. Functionally, (Microbial infection) Acts as an attachment receptor for Cytomegalovirus. In terms of biological role, (Microbial infection) Acts as an attachment receptor for HCV. Its function is as follows. (Microbial infection) Acts as an attachment receptor for Dengue virus. (Microbial infection) Acts as an attachment receptor for Measles virus. Functionally, (Microbial infection) Acts as an attachment receptor for Herpes simplex virus 1. In terms of biological role, (Microbial infection) Acts as an attachment receptor for Influenzavirus A. Its function is as follows. (Microbial infection) Acts as an attachment receptor for SARS-CoV. (Microbial infection) Acts as an attachment receptor for Japanese encephalitis virus. Functionally, (Microbial infection) Acts as an attachment receptor for Lassa virus. Acts as an attachment receptor for Marburg virusn. In terms of biological role, (Microbial infection) Acts as an attachment receptor for Respiratory syncytial virus. Its function is as follows. (Microbial infection) Acts as an attachment receptor for Rift valley fever virus and uukuniemi virus. (Microbial infection) Acts as an attachment receptor for West-nile virus. Functionally, (Microbial infection) Probably recognizes in a calcium-dependent manner high mannose N-linked oligosaccharides in a variety of bacterial pathogen antigens, including Leishmania pifanoi LPG, Lewis-x antigen in Helicobacter pylori LPS, mannose in Klebsiella pneumonae LPS, di-mannose and tri-mannose in Mycobacterium tuberculosis ManLAM and Lewis-x antigen in Schistosoma mansoni SEA. Recognition of M.tuberculosis by dendritic cells occurs partially via this molecule. The sequence is that of CD209 antigen (CD209) from Homo sapiens (Human).